A 421-amino-acid chain; its full sequence is Histidine--tRNA ligase (421 aa).

This sequence belongs to the class-II aminoacyl-tRNA synthetase family.

The protein localises to the cytoplasm. The catalysed reaction is tRNA(His) + L-histidine + ATP = L-histidyl-tRNA(His) + AMP + diphosphate + H(+). The chain is Histidine--tRNA ligase from Pyrobaculum islandicum (strain DSM 4184 / JCM 9189 / GEO3).